The chain runs to 380 residues: Ceramide-binding protein svf1 (380 aa).

A peripherally associates with membranes region spans residues 1-18; sequence MKAWLQSSISYYTGTAEP.

Belongs to the SVF1 family.

It localises to the golgi apparatus. The protein resides in the cis-Golgi network membrane. The protein localises to the endoplasmic reticulum membrane. It is found in the cytoplasm. Its subcellular location is the nucleus. Ceramide-binding protein that may transfer ceramides from the endoplasmic reticulum membrane to the cis-Golgi network membrane, and is thereby required for the biosynthesis of complex sphingolipids. This Schizosaccharomyces pombe (strain 972 / ATCC 24843) (Fission yeast) protein is Ceramide-binding protein svf1.